A 379-amino-acid chain; its full sequence is Chaperone protein DnaJ (379 aa).

The J domain occupies 5–70 (DFYEVLGVSR…QKRSAYDQYG (66 aa)). Residues 134–212 (GCDKEIEVPT…CHGEGRVHKT (79 aa)) form a CR-type zinc finger. Residues cysteine 147, cysteine 150, cysteine 164, cysteine 167, cysteine 186, cysteine 189, cysteine 200, and cysteine 203 each contribute to the Zn(2+) site. CXXCXGXG motif repeat units follow at residues 147-154 (CDPCEGTG), 164-171 (CSTCHGQG), 186-193 (CPTCHGKG), and 200-207 (CNSCHGEG).

It belongs to the DnaJ family. As to quaternary structure, homodimer. Zn(2+) is required as a cofactor.

The protein resides in the cytoplasm. In terms of biological role, participates actively in the response to hyperosmotic and heat shock by preventing the aggregation of stress-denatured proteins and by disaggregating proteins, also in an autonomous, DnaK-independent fashion. Unfolded proteins bind initially to DnaJ; upon interaction with the DnaJ-bound protein, DnaK hydrolyzes its bound ATP, resulting in the formation of a stable complex. GrpE releases ADP from DnaK; ATP binding to DnaK triggers the release of the substrate protein, thus completing the reaction cycle. Several rounds of ATP-dependent interactions between DnaJ, DnaK and GrpE are required for fully efficient folding. Also involved, together with DnaK and GrpE, in the DNA replication of plasmids through activation of initiation proteins. The chain is Chaperone protein DnaJ from Aliivibrio fischeri (strain ATCC 700601 / ES114) (Vibrio fischeri).